We begin with the raw amino-acid sequence, 328 residues long: Ribosomal RNA small subunit methyltransferase H (328 aa).

Residues 37 to 39 (GGH), D57, F83, D104, and Q111 each bind S-adenosyl-L-methionine.

This sequence belongs to the methyltransferase superfamily. RsmH family.

The protein resides in the cytoplasm. It catalyses the reaction cytidine(1402) in 16S rRNA + S-adenosyl-L-methionine = N(4)-methylcytidine(1402) in 16S rRNA + S-adenosyl-L-homocysteine + H(+). Its function is as follows. Specifically methylates the N4 position of cytidine in position 1402 (C1402) of 16S rRNA. The sequence is that of Ribosomal RNA small subunit methyltransferase H from Neisseria meningitidis serogroup A / serotype 4A (strain DSM 15465 / Z2491).